The sequence spans 209 residues: N-(5'-phosphoribosyl)anthranilate isomerase (209 aa).

The protein belongs to the TrpF family.

The enzyme catalyses N-(5-phospho-beta-D-ribosyl)anthranilate = 1-(2-carboxyphenylamino)-1-deoxy-D-ribulose 5-phosphate. It functions in the pathway amino-acid biosynthesis; L-tryptophan biosynthesis; L-tryptophan from chorismate: step 3/5. In Erythrobacter litoralis (strain HTCC2594), this protein is N-(5'-phosphoribosyl)anthranilate isomerase.